The sequence spans 256 residues: Imidazole glycerol phosphate synthase subunit HisF (256 aa).

Active-site residues include aspartate 12 and aspartate 131.

Belongs to the HisA/HisF family. Heterodimer of HisH and HisF.

The protein localises to the cytoplasm. The catalysed reaction is 5-[(5-phospho-1-deoxy-D-ribulos-1-ylimino)methylamino]-1-(5-phospho-beta-D-ribosyl)imidazole-4-carboxamide + L-glutamine = D-erythro-1-(imidazol-4-yl)glycerol 3-phosphate + 5-amino-1-(5-phospho-beta-D-ribosyl)imidazole-4-carboxamide + L-glutamate + H(+). Its pathway is amino-acid biosynthesis; L-histidine biosynthesis; L-histidine from 5-phospho-alpha-D-ribose 1-diphosphate: step 5/9. Its function is as follows. IGPS catalyzes the conversion of PRFAR and glutamine to IGP, AICAR and glutamate. The HisF subunit catalyzes the cyclization activity that produces IGP and AICAR from PRFAR using the ammonia provided by the HisH subunit. This is Imidazole glycerol phosphate synthase subunit HisF from Pseudomonas fluorescens (strain Pf0-1).